A 184-amino-acid chain; its full sequence is C-phycoerythrin beta chain (184 aa).

Residues Cys-48 and Cys-59 each contribute to the (2R,3E)-phycoerythrobilin site. Asn-70 is modified (N4-methylasparagine). Positions 80 and 165 each coordinate (2R,3E)-phycoerythrobilin.

Belongs to the phycobiliprotein family. Heterodimer of an alpha and a beta chain. Contains three covalently linked bilin chromophores.

Its subcellular location is the cellular thylakoid membrane. Its function is as follows. Light-harvesting photosynthetic bile pigment-protein from the phycobiliprotein complex. This chain is C-phycoerythrin beta chain (cpeB), found in Microchaete diplosiphon (Fremyella diplosiphon).